Here is a 176-residue protein sequence, read N- to C-terminus: Nucleoside triphosphate/diphosphate phosphatase (176 aa).

Residue arginine 23 is the Proton donor of the active site. Residues asparagine 87, aspartate 103, aspartate 105, aspartate 107, aspartate 120, and glutamate 123 each coordinate Mg(2+).

This sequence belongs to the Ntdp family. Mg(2+) is required as a cofactor.

It catalyses the reaction a ribonucleoside 5'-triphosphate + H2O = a ribonucleoside 5'-diphosphate + phosphate + H(+). The enzyme catalyses a ribonucleoside 5'-diphosphate + H2O = a ribonucleoside 5'-phosphate + phosphate + H(+). In terms of biological role, has nucleoside phosphatase activity towards nucleoside triphosphates and nucleoside diphosphates. The sequence is that of Nucleoside triphosphate/diphosphate phosphatase from Bacillus cereus (strain G9842).